Reading from the N-terminus, the 407-residue chain is Peptidase T (407 aa).

H81 serves as a coordination point for Zn(2+). D83 is a catalytic residue. D142 contributes to the Zn(2+) binding site. The active-site Proton acceptor is E176. Zn(2+)-binding residues include E177, D199, and H381.

The protein belongs to the peptidase M20B family. Zn(2+) is required as a cofactor.

Its subcellular location is the cytoplasm. The enzyme catalyses Release of the N-terminal residue from a tripeptide.. Cleaves the N-terminal amino acid of tripeptides. This Streptococcus pneumoniae (strain JJA) protein is Peptidase T.